The following is a 230-amino-acid chain: Demethylmenaquinone methyltransferase (230 aa).

Residues Thr-62, Asp-80, 100 to 101, and Ser-117 contribute to the S-adenosyl-L-methionine site; that span reads DG.

This sequence belongs to the class I-like SAM-binding methyltransferase superfamily. MenG/UbiE family.

The enzyme catalyses a 2-demethylmenaquinol + S-adenosyl-L-methionine = a menaquinol + S-adenosyl-L-homocysteine + H(+). It functions in the pathway quinol/quinone metabolism; menaquinone biosynthesis; menaquinol from 1,4-dihydroxy-2-naphthoate: step 2/2. Methyltransferase required for the conversion of demethylmenaquinol (DMKH2) to menaquinol (MKH2). The polypeptide is Demethylmenaquinone methyltransferase (Corynebacterium urealyticum (strain ATCC 43042 / DSM 7109)).